Reading from the N-terminus, the 217-residue chain is Thiamine-phosphate synthase (217 aa).

4-amino-2-methyl-5-(diphosphooxymethyl)pyrimidine contacts are provided by residues 44 to 48 and asparagine 76; that span reads QYREK. Mg(2+) is bound by residues aspartate 77 and aspartate 96. Serine 115 is a binding site for 4-amino-2-methyl-5-(diphosphooxymethyl)pyrimidine. Position 141–143 (141–143) interacts with 2-[(2R,5Z)-2-carboxy-4-methylthiazol-5(2H)-ylidene]ethyl phosphate; sequence TKT. Lysine 144 serves as a coordination point for 4-amino-2-methyl-5-(diphosphooxymethyl)pyrimidine. 2-[(2R,5Z)-2-carboxy-4-methylthiazol-5(2H)-ylidene]ethyl phosphate is bound by residues glycine 172 and 192-193; that span reads VS.

It belongs to the thiamine-phosphate synthase family. It depends on Mg(2+) as a cofactor.

It carries out the reaction 2-[(2R,5Z)-2-carboxy-4-methylthiazol-5(2H)-ylidene]ethyl phosphate + 4-amino-2-methyl-5-(diphosphooxymethyl)pyrimidine + 2 H(+) = thiamine phosphate + CO2 + diphosphate. The enzyme catalyses 2-(2-carboxy-4-methylthiazol-5-yl)ethyl phosphate + 4-amino-2-methyl-5-(diphosphooxymethyl)pyrimidine + 2 H(+) = thiamine phosphate + CO2 + diphosphate. The catalysed reaction is 4-methyl-5-(2-phosphooxyethyl)-thiazole + 4-amino-2-methyl-5-(diphosphooxymethyl)pyrimidine + H(+) = thiamine phosphate + diphosphate. It participates in cofactor biosynthesis; thiamine diphosphate biosynthesis; thiamine phosphate from 4-amino-2-methyl-5-diphosphomethylpyrimidine and 4-methyl-5-(2-phosphoethyl)-thiazole: step 1/1. Its function is as follows. Condenses 4-methyl-5-(beta-hydroxyethyl)thiazole monophosphate (THZ-P) and 2-methyl-4-amino-5-hydroxymethyl pyrimidine pyrophosphate (HMP-PP) to form thiamine monophosphate (TMP). In Lawsonia intracellularis (strain PHE/MN1-00), this protein is Thiamine-phosphate synthase.